The chain runs to 203 residues: Large ribosomal subunit protein uL22 (203 aa).

Polar residues-rich tracts occupy residues 116–126 (QNGGESQNQEY) and 134–167 (VSKSPENTQSGALSQQIRGEQPQNDPENGVDSQL). The disordered stretch occupies residues 116 to 203 (QNGGESQNQE…TVLAQEKEVK (88 aa)). Residues 168 to 194 (SAKTNSTTTAKKTDLADNNTKNDATNT) are compositionally biased toward low complexity.

It belongs to the universal ribosomal protein uL22 family. In terms of assembly, part of the 50S ribosomal subunit.

In terms of biological role, this protein binds specifically to 23S rRNA; its binding is stimulated by other ribosomal proteins, e.g. L4, L17, and L20. It is important during the early stages of 50S assembly. It makes multiple contacts with different domains of the 23S rRNA in the assembled 50S subunit and ribosome. Its function is as follows. The globular domain of the protein is located near the polypeptide exit tunnel on the outside of the subunit, while an extended beta-hairpin is found that lines the wall of the exit tunnel in the center of the 70S ribosome. In Mesomycoplasma hyopneumoniae (strain 232) (Mycoplasma hyopneumoniae), this protein is Large ribosomal subunit protein uL22.